The primary structure comprises 465 residues: L-seryl-tRNA(Sec) selenium transferase (465 aa).

Lysine 294 is subject to N6-(pyridoxal phosphate)lysine.

It belongs to the SelA family. Requires pyridoxal 5'-phosphate as cofactor.

The protein localises to the cytoplasm. The catalysed reaction is L-seryl-tRNA(Sec) + selenophosphate + H(+) = L-selenocysteinyl-tRNA(Sec) + phosphate. Its pathway is aminoacyl-tRNA biosynthesis; selenocysteinyl-tRNA(Sec) biosynthesis; selenocysteinyl-tRNA(Sec) from L-seryl-tRNA(Sec) (bacterial route): step 1/1. Its function is as follows. Converts seryl-tRNA(Sec) to selenocysteinyl-tRNA(Sec) required for selenoprotein biosynthesis. This is L-seryl-tRNA(Sec) selenium transferase from Mannheimia succiniciproducens (strain KCTC 0769BP / MBEL55E).